Here is a 100-residue protein sequence, read N- to C-terminus: Large ribosomal subunit protein eL21 (100 aa).

This sequence belongs to the eukaryotic ribosomal protein eL21 family.

In Pyrobaculum arsenaticum (strain DSM 13514 / JCM 11321 / PZ6), this protein is Large ribosomal subunit protein eL21.